Reading from the N-terminus, the 206-residue chain is Thymidylate kinase (206 aa).

Glycine 11–threonine 18 contributes to the ATP binding site.

This sequence belongs to the thymidylate kinase family.

The enzyme catalyses dTMP + ATP = dTDP + ADP. Its function is as follows. Phosphorylation of dTMP to form dTDP in both de novo and salvage pathways of dTTP synthesis. In Paraburkholderia phytofirmans (strain DSM 17436 / LMG 22146 / PsJN) (Burkholderia phytofirmans), this protein is Thymidylate kinase.